Consider the following 230-residue polypeptide: Ribosomal RNA small subunit methyltransferase G (230 aa).

S-adenosyl-L-methionine-binding positions include G74, F79, 124 to 125 (AE), and R141.

The protein belongs to the methyltransferase superfamily. RNA methyltransferase RsmG family.

Its subcellular location is the cytoplasm. Its function is as follows. Specifically methylates the N7 position of a guanine in 16S rRNA. In Acholeplasma laidlawii (strain PG-8A), this protein is Ribosomal RNA small subunit methyltransferase G.